The primary structure comprises 415 residues: Serine hydroxymethyltransferase (415 aa).

Residues Leu121 and Gly125–Leu127 contribute to the (6S)-5,6,7,8-tetrahydrofolate site. At Lys230 the chain carries N6-(pyridoxal phosphate)lysine. Residues Glu246 and Ser354–Phe356 each bind (6S)-5,6,7,8-tetrahydrofolate.

It belongs to the SHMT family. Homodimer. Requires pyridoxal 5'-phosphate as cofactor.

It is found in the cytoplasm. It carries out the reaction (6R)-5,10-methylene-5,6,7,8-tetrahydrofolate + glycine + H2O = (6S)-5,6,7,8-tetrahydrofolate + L-serine. Its pathway is one-carbon metabolism; tetrahydrofolate interconversion. It functions in the pathway amino-acid biosynthesis; glycine biosynthesis; glycine from L-serine: step 1/1. Functionally, catalyzes the reversible interconversion of serine and glycine with tetrahydrofolate (THF) serving as the one-carbon carrier. This reaction serves as the major source of one-carbon groups required for the biosynthesis of purines, thymidylate, methionine, and other important biomolecules. Also exhibits THF-independent aldolase activity toward beta-hydroxyamino acids, producing glycine and aldehydes, via a retro-aldol mechanism. The chain is Serine hydroxymethyltransferase from Bdellovibrio bacteriovorus (strain ATCC 15356 / DSM 50701 / NCIMB 9529 / HD100).